A 1564-amino-acid chain; its full sequence is Superkiller complex protein 3 (1564 aa).

Serine 2 is subject to N-acetylserine. TPR repeat units lie at residues 6–39 (VKTA…EKNN), 40–73 (YNAW…EPDQ), 272–305 (GPGL…SPVC), 307–339 (SGWY…VDNL), 386–419 (PGLL…YPDL), 420–453 (AEVH…DTEV), 455–492 (EYHY…DTYM), 493–527 (GKVF…DDTD), 564–597 (KWAW…DPKD), 598–631 (FNCW…NPES), 633–665 (YSVF…KEDY), 679–713 (MAKA…RADV), 790–824 (AQHL…DSNN), 826–860 (LYWN…EQIN), 861–894 (AVAW…DPSY), 980–1013 (APAF…LQTA), 1020–1054 (NVAI…LEDI), 1056–1084 (GFAL…VESE), 1326–1359 (KWSL…NPDQ), and 1400–1433 (VPAW…ASQR).

It belongs to the SKI3 family. Component of the SKI complex which consists of SKIC2, SKIC3 and SKIC8. Interacts with PAF1. Widely expressed with the highest levels observed in vascular tissues, lymph node, pituitary, lung and intestine. Not expressed in the liver.

Its subcellular location is the cytoplasm. The protein localises to the nucleus. Component of the SKI complex, a multiprotein complex that assists the RNA-degrading exosome during the mRNA decay and quality-control pathways. The SKI complex catalyzes mRNA extraction from 80S ribosomal complexes in the 3'-5' direction and channels mRNA to the cytosolic exosome for degradation. SKI-mediated extraction of mRNA from stalled ribosomes allow binding of the Pelota-HBS1L complex and subsequent ribosome disassembly by ABCE1 for ribosome recycling. In the nucleus, the SKI complex associates with transcriptionally active genes in a manner dependent on PAF1 complex (PAF1C). The chain is Superkiller complex protein 3 from Homo sapiens (Human).